A 478-amino-acid polypeptide reads, in one-letter code: Argininosuccinate lyase (478 aa).

It belongs to the lyase 1 family. Argininosuccinate lyase subfamily.

It localises to the cytoplasm. It carries out the reaction 2-(N(omega)-L-arginino)succinate = fumarate + L-arginine. It participates in amino-acid biosynthesis; L-arginine biosynthesis; L-arginine from L-ornithine and carbamoyl phosphate: step 3/3. This chain is Argininosuccinate lyase, found in Leptospira biflexa serovar Patoc (strain Patoc 1 / Ames).